Reading from the N-terminus, the 60-residue chain is Cytotoxin 8 (60 aa).

Cystine bridges form between C3–C21, C14–C38, C42–C53, and C54–C59.

Belongs to the three-finger toxin family. Short-chain subfamily. Type IA cytotoxin sub-subfamily. Monomer in solution; Homodimer and oligomer in the presence of negatively charged lipids forming a pore with a size ranging between 20 and 30 Angstroms. In terms of tissue distribution, expressed by the venom gland.

Its subcellular location is the secreted. It localises to the target cell membrane. Its function is as follows. Shows cytolytic activity on many different cells by forming pore in lipid membranes. In vivo, increases heart rate or kills the animal by cardiac arrest. In addition, it binds to heparin with high affinity, interacts with Kv channel-interacting protein 1 (KCNIP1) in a calcium-independent manner, and binds to integrin alpha-V/beta-3 (ITGAV/ITGB3) with moderate affinity. Has hemolytic activity towards human erythrocytes (EC(50)=0.074 uM) and cytolytic activity towards various cell lines. The chain is Cytotoxin 8 from Naja naja (Indian cobra).